The following is a 142-amino-acid chain: Hemoglobin subunit alpha (142 aa).

Positions 2–142 (VLSDANKQEI…LVHQLSSKYR (141 aa)) constitute a Globin domain. Residue histidine 60 coordinates O2. Histidine 89 is a binding site for heme b.

Belongs to the globin family. Heterotetramer of two alpha chains and two beta chains. Red blood cells.

Involved in oxygen transport from gills to the various peripheral tissues. The sequence is that of Hemoglobin subunit alpha (HBA) from Bathyraja eatonii (Eaton's skate).